Reading from the N-terminus, the 1031-residue chain is GTPase activating protein Gyp51 (1031 aa).

Residues 1-32 (MAFTEANEREVQSSYEKENVKIIREEEAKDQE) show a composition bias toward basic and acidic residues. 5 disordered regions span residues 1 to 229 (MAFT…TNVN), 278 to 317 (FIEQ…SQND), 339 to 371 (DHLP…DHKA), 420 to 459 (NDEL…PSHV), and 490 to 520 (KKNT…STSP). A compositionally biased stretch (polar residues) spans 43–59 (TGTSPDLNFFSTQNVMQ). A compositionally biased stretch (acidic residues) spans 62–78 (FEDEYSEFSNEDDEAEI). Residues 105-117 (SQQSVEEQNNTTN) are compositionally biased toward polar residues. Positions 195 to 217 (EDLKDEVKSVHEFNEPNDLRQQE) are enriched in basic and acidic residues. Residues 219–229 (SYSDDDDTNVN) are compositionally biased toward acidic residues. Polar residues predominate over residues 278–306 (FIEQNGPNSDTVSGFKETSSIVNSSSTTE). Polar residues-rich tracts occupy residues 420–429 (NDELSASGSQ), 436–455 (GTNS…NSEP), and 493–505 (TAFS…STNH). The region spanning 610–806 (HNSHTVHTVV…HLYDILFLYG (197 aa)) is the Rab-GAP TBC domain. The chain crosses the membrane as a helical span at residues 798–818 (LYDILFLYGPGILFNFGLALL).

Belongs to the GYP5 family.

It is found in the membrane. The protein resides in the cytoplasm. GTPase-activating protein involved in ER to Golgi trafficking and polarized exocytosis. This Schizosaccharomyces pombe (strain 972 / ATCC 24843) (Fission yeast) protein is GTPase activating protein Gyp51 (gyp51).